Consider the following 143-residue polypeptide: Glutamyl-tRNA(Gln) amidotransferase subunit C, chloroplastic/mitochondrial (143 aa).

Belongs to the GatC family. As to quaternary structure, subunit of the heterotrimeric GatCAB amidotransferase (AdT) complex, composed of A, B and C subunits.

The protein localises to the mitochondrion. It localises to the plastid. Its subcellular location is the chloroplast. It catalyses the reaction L-glutamyl-tRNA(Gln) + L-glutamine + ATP + H2O = L-glutaminyl-tRNA(Gln) + L-glutamate + ADP + phosphate + H(+). Its function is as follows. Allows the formation of correctly charged Gln-tRNA(Gln) through the transamidation of misacylated Glu-tRNA(Gln) in chloroplasts and mitochondria. The reaction takes place in the presence of glutamine and ATP through an activated gamma-phospho-Glu-tRNA(Gln). In Ricinus communis (Castor bean), this protein is Glutamyl-tRNA(Gln) amidotransferase subunit C, chloroplastic/mitochondrial.